The primary structure comprises 860 residues: Beta-glucosidase 1 (860 aa).

The N-terminal stretch at 1–19 is a signal peptide; sequence MKLSWLEAAALTAASVVSA. N61, N211, and N252 each carry an N-linked (GlcNAc...) asparagine glycan. D280 is a catalytic residue. 12 N-linked (GlcNAc...) asparagine glycosylation sites follow: N315, N322, N354, N387, N442, N523, N542, N564, N658, N668, N690, and N712.

This sequence belongs to the glycosyl hydrolase 3 family.

It catalyses the reaction Hydrolysis of terminal, non-reducing beta-D-glucosyl residues with release of beta-D-glucose.. The protein operates within glycan metabolism; cellulose degradation. The sequence is that of Beta-glucosidase 1 from Aspergillus aculeatus.